Here is a 704-residue protein sequence, read N- to C-terminus: MANLQERKSFSKPRISIQASGGTPEAKGIEKRKLSQKRRTLPLQLSLGGHLSPWPTYTSGQTVLHNRKPCSDDSRNRANSCQQQSMSISKPKYLEQLENYLRKELLLLDLSTDSAQELRLQPYREIFEFFIEDFKTYKPLLSSIKNAYEVMLAHQKERIRSLEPLKAKIVTMNEDCSERVLAMRAEERYEISVLKKEKMNLLKLIDKKNEEKISLQSEVAKLRRSLAEEYLRYLTERDARKILIGDLNELRYQQEDMSLAQTPGVWGEDPVKLTLALKMTRQDLTRTQMELNTMKANSGDVVPRRDLEMQEKTNMELQEQLESLKADYEEVQKEHELLLQLHMSTLKERDQFYNELQEIQRTSTPRPDWTKCESIIAGGPERWLVLAEGKNSDQLVDVLLEEIGMGLLREKDFFPGLGFGDAIPPFLRFDGPVKNKKPSKKEVVNLLKDAWKERIAEEQKEPFPDFFFNFLERRFGVNDAMAWAYTIFENIKLFRSSEIMNQFYAVLMGKNLESVYINQKKTLSHLLKELLSVDTQNEGSITMEQFSTILKTTFPLKKEEQIQELMEAVGWGPDSSNTDMLNYRSLFNEDEEGQSEPFVQRLWEQYESDKEAYLEELKQELDLDPLEDVTLLKMRGTLMNIDPTMDKQTLSAYLSQAYQIPAIDVPLEDEEKQGIISIKVETALDRLRMADTKRVGPREPDPAS.

Residues 1–37 are disordered; the sequence is MANLQERKSFSKPRISIQASGGTPEAKGIEKRKLSQK. 2 coiled-coil regions span residues 190–230 and 304–342; these read EISV…AEEY and RRDLEMQEKTNMELQEQLESLKADYEEVQKEHELLLQLH.

In terms of assembly, interacts with TSNAX. Specifically expressed in testes. Predominantly detected in the post-meiotic stages of germ cells.

It is found in the cytoplasm. The protein localises to the perinuclear region. Possible role in spermatogenesis. The chain is Translin-associated factor X-interacting protein 1 from Mus musculus (Mouse).